Reading from the N-terminus, the 131-residue chain is Profilin-9 (131 aa).

Cysteines 13 and 115 form a disulfide. An Involved in PIP2 interaction motif is present at residues 81–97; sequence AVTRGKKGAGGITIKKT. The residue at position 111 (Thr111) is a Phosphothreonine.

It belongs to the profilin family. In terms of assembly, occurs in many kinds of cells as a complex with monomeric actin in a 1:1 ratio. Phosphorylated by MAP kinases.

It localises to the cytoplasm. The protein localises to the cytoskeleton. Functionally, binds to actin and affects the structure of the cytoskeleton. At high concentrations, profilin prevents the polymerization of actin, whereas it enhances it at low concentrations. This chain is Profilin-9, found in Phleum pratense (Common timothy).